The sequence spans 494 residues: Guanosine-5'-triphosphate,3'-diphosphate pyrophosphatase (494 aa).

It belongs to the GppA/Ppx family. GppA subfamily.

It catalyses the reaction guanosine 3'-diphosphate 5'-triphosphate + H2O = guanosine 3',5'-bis(diphosphate) + phosphate + H(+). The protein operates within purine metabolism; ppGpp biosynthesis; ppGpp from GTP: step 2/2. In terms of biological role, catalyzes the conversion of pppGpp to ppGpp. Guanosine pentaphosphate (pppGpp) is a cytoplasmic signaling molecule which together with ppGpp controls the 'stringent response', an adaptive process that allows bacteria to respond to amino acid starvation, resulting in the coordinated regulation of numerous cellular activities. The polypeptide is Guanosine-5'-triphosphate,3'-diphosphate pyrophosphatase (Cronobacter sakazakii (strain ATCC BAA-894) (Enterobacter sakazakii)).